The chain runs to 153 residues: uncharacterized protein (153 aa).

The protein resides in the mitochondrion. This is an uncharacterized protein from Arabidopsis thaliana (Mouse-ear cress).